Here is a 401-residue protein sequence, read N- to C-terminus: Inactive leucine-rich repeat receptor-like protein kinase CORYNE (401 aa).

The signal sequence occupies residues Met-1 to Ser-33. Topologically, residues Thr-34–Val-62 are extracellular. A helical transmembrane segment spans residues Ile-63 to Phe-83. Residues Leu-84–Phe-401 lie on the Cytoplasmic side of the membrane. Positions Ser-118–Phe-401 constitute a Protein kinase domain. Residues Leu-124–Tyr-132 and Lys-146 contribute to the ATP site.

The protein belongs to the protein kinase superfamily. Ser/Thr protein kinase family. Self-interacts. Parts of a tetrameric complex made of two CLV2/CRN heterodimers that can interact with CLV3 and CLE peptides. CLV2/CRN heterodimer interacts with CLV1 homodimers. Interacts with CLV1 and CLV2. CLV2/CRN heterodimer can interact with BAM3. Present in roots, stems, leaves, inflorescence, flowers and siliques. Mostly expressed in shoot tips and, to a lesser extent, in young organs and roots. Also expressed in the inner tissues of the proximal root meristem. Expressed in the vascular cylinder of root tips, mostly in phloem poles.

The protein localises to the cell membrane. It is found in the endoplasmic reticulum membrane. In terms of biological role, involved in the perception of CLV3 and CLV3-like (CLE) peptides, that act as extracellular signals regulating meristem maintenance. Modulates root, shoot and flower apical meristem maintenance and floral organ development regulation, probably via CLAVATA (CLV)-like pathways involving at least CLV3 and CLE19. In complex with CLV2, perceives secreted CLV3-like effector proteins from plant-parasitic cyst nematodes as ligand mimics of the plant CLE signaling pathway. This recognition is required for proper feeding structure (syncytium) development and ultimately successful nematode infection. CLE14 perception by CLV2/CRN complex triggers root meristem differentiation. Required for the sensing of the root CLE peptides (e.g. CLE8, CLE9/CLE10, CLE11, CLE13, CLE14, CLE16, CLE17, CLE18, CLE20, CLE21, CLE25, CLE26, CLE40, CLE41/CLE44 and CLE45), which also involves CLV2 and leads to root growth regulation, mostly in the phloem and protophloem. Promotes the accumulation of BAM3, especially at later stages of protophloem development. This chain is Inactive leucine-rich repeat receptor-like protein kinase CORYNE, found in Arabidopsis thaliana (Mouse-ear cress).